A 315-amino-acid polypeptide reads, in one-letter code: Eukaryotic translation initiation factor 2 subunit 1 (315 aa).

One can recognise an S1 motif domain in the interval 17–88; the sequence is EDVVMVNVRS…EKGYIDLSKR (72 aa). A phosphoserine mark is found at Ser49 and Ser52. Positions 292 to 315 are disordered; sequence RLERENAEVDGDDDAEEMEAKTED. Positions 299–308 are enriched in acidic residues; that stretch reads EVDGDDDAEE.

It belongs to the eIF-2-alpha family. In terms of assembly, eukaryotic translation initiation factor 2 eIF2 is a heterotrimeric complex composed of an alpha (EIF2S1), a beta (EIF2S2) and a gamma (EIF2S3) chain. Phosphorylation at Ser-49 and Ser-52 stabilizes the eIF-2/GDP/eIF2B complex and prevents GDP/GTP exchange reaction, thus impairing the recycling of eIF-2 between successive rounds of initiation and leading to global inhibition of translation, while concomitantly initiating the preferential translation of integrated stress response (ISR)-specific mRNAs.

It is found in the cytoplasm. Its subcellular location is the stress granule. It localises to the cytosol. Its activity is regulated as follows. Activity is regulated by phosphorylation at Ser-49 and Ser-52, which stabilizes the eIF2/GDP/eIF2B complex and prevents the eIF2B-mediated exchange of GDP for GTP, thereby preventing the formation of the 43S pre-initiation complex (43S PIC). This results in the global attenuation of 5' cap-dependent protein synthesis and concomitant translation of ISR-specific mRNAs that contain a short upstream open reading frame (uORF) in their 5' UTR. Functionally, member of the eIF2 complex that functions in the early steps of protein synthesis by forming a ternary complex with GTP and initiator tRNA. This complex binds to a 40S ribosomal subunit, followed by mRNA binding to form a 43S pre-initiation complex. Junction of the 60S ribosomal subunit to form the 80S initiation complex is preceded by hydrolysis of the GTP bound to eIF2 and release of an eIF2-GDP binary complex. In order for eIF2 to recycle and catalyze another round of initiation, the GDP bound to eIF2 must exchange with GTP by way of a reaction catalyzed by eIF2B. EIF2S1/eIF2-alpha is a key component of the integrated stress response (ISR), required for adaptation to various stress: phosphorylation by metabolic-stress sensing protein kinases (EIF2AK1/HRI, EIF2AK2/PKR, EIF2AK3/PERK and EIF2AK4/GCN2) in response to stress converts EIF2S1/eIF2-alpha in a global protein synthesis inhibitor, leading to a attenuation of cap-dependent translation, while concomitantly initiating the preferential translation of ISR-specific mRNAs, such as the transcriptional activators ATF4 and QRICH1. This Gallus gallus (Chicken) protein is Eukaryotic translation initiation factor 2 subunit 1 (EIF2S1).